The sequence spans 251 residues: uncharacterized protein (251 aa).

5 helical membrane-spanning segments follow: residues 22–42, 86–106, 120–140, 157–177, and 205–225; these read FLGVIPLFFICFVFVIADIVI, FFLSAFAYIIFTFLGYNVILA, LASSVFLHVLAPIAFLVAGIV, LGYFMIYPLVYGLYLATIPYV, and IVAWPVVICFLFIYFPLSFLA.

The protein resides in the cell membrane. This is an uncharacterized protein from Mycoplasma pneumoniae (strain ATCC 29342 / M129 / Subtype 1) (Mycoplasmoides pneumoniae).